Here is a 177-residue protein sequence, read N- to C-terminus: Peptide methionine sulfoxide reductase MsrA (177 aa).

The active site involves Cys-15.

This sequence belongs to the MsrA Met sulfoxide reductase family.

The enzyme catalyses L-methionyl-[protein] + [thioredoxin]-disulfide + H2O = L-methionyl-(S)-S-oxide-[protein] + [thioredoxin]-dithiol. The catalysed reaction is [thioredoxin]-disulfide + L-methionine + H2O = L-methionine (S)-S-oxide + [thioredoxin]-dithiol. Its function is as follows. Has an important function as a repair enzyme for proteins that have been inactivated by oxidation. Catalyzes the reversible oxidation-reduction of methionine sulfoxide in proteins to methionine. The polypeptide is Peptide methionine sulfoxide reductase MsrA (Listeria innocua serovar 6a (strain ATCC BAA-680 / CLIP 11262)).